Consider the following 160-residue polypeptide: MTMPPPRPPRILVKRLAHAEGLALPAYQTAGAAGLDLAAALPHGTTLVLEPGGRHLLPTGFCLEIPEGYEAQVRPRSGLARKHGVTVLNTPGTIDADYRGEIGVILINMGDEPFEIVRGTRIAQLVVAPCVQAELIETHTLSDTERGEDGFGSTGHGSHQ.

Substrate-binding positions include Arg76–Gly78, Asn89, and Thr93–Asp95. Over residues His139 to Asp149 the composition is skewed to basic and acidic residues. Residues His139–Gln160 are disordered. Residues Gly150–Gln160 show a composition bias toward gly residues.

This sequence belongs to the dUTPase family. It depends on Mg(2+) as a cofactor.

The catalysed reaction is dUTP + H2O = dUMP + diphosphate + H(+). It functions in the pathway pyrimidine metabolism; dUMP biosynthesis; dUMP from dCTP (dUTP route): step 2/2. In terms of biological role, this enzyme is involved in nucleotide metabolism: it produces dUMP, the immediate precursor of thymidine nucleotides and it decreases the intracellular concentration of dUTP so that uracil cannot be incorporated into DNA. This chain is Deoxyuridine 5'-triphosphate nucleotidohydrolase, found in Beijerinckia indica subsp. indica (strain ATCC 9039 / DSM 1715 / NCIMB 8712).